Reading from the N-terminus, the 272-residue chain is 5'-nucleotidase SurE (272 aa).

A divalent metal cation contacts are provided by aspartate 8, aspartate 9, serine 39, and asparagine 96.

The protein belongs to the SurE nucleotidase family. A divalent metal cation serves as cofactor.

The protein resides in the cytoplasm. The enzyme catalyses a ribonucleoside 5'-phosphate + H2O = a ribonucleoside + phosphate. In terms of biological role, nucleotidase that shows phosphatase activity on nucleoside 5'-monophosphates. The sequence is that of 5'-nucleotidase SurE from Heliobacterium modesticaldum (strain ATCC 51547 / Ice1).